A 77-amino-acid polypeptide reads, in one-letter code: Putative antitoxin VapB3 (77 aa).

The protein belongs to the UPF0330 family.

In terms of biological role, possibly the antitoxin component of a type II toxin-antitoxin (TA) system. Its cognate toxin is VapC3 (Potential). This chain is Putative antitoxin VapB3 (vapB3), found in Methanocaldococcus jannaschii (strain ATCC 43067 / DSM 2661 / JAL-1 / JCM 10045 / NBRC 100440) (Methanococcus jannaschii).